Consider the following 289-residue polypeptide: 4-diphosphocytidyl-2-C-methyl-D-erythritol kinase (289 aa).

Residue K10 is part of the active site. 95–105 (PVSAGMGGGSA) is an ATP binding site. D137 is an active-site residue.

This sequence belongs to the GHMP kinase family. IspE subfamily.

It carries out the reaction 4-CDP-2-C-methyl-D-erythritol + ATP = 4-CDP-2-C-methyl-D-erythritol 2-phosphate + ADP + H(+). Its pathway is isoprenoid biosynthesis; isopentenyl diphosphate biosynthesis via DXP pathway; isopentenyl diphosphate from 1-deoxy-D-xylulose 5-phosphate: step 3/6. Its function is as follows. Catalyzes the phosphorylation of the position 2 hydroxy group of 4-diphosphocytidyl-2C-methyl-D-erythritol. This Ligilactobacillus salivarius (strain UCC118) (Lactobacillus salivarius) protein is 4-diphosphocytidyl-2-C-methyl-D-erythritol kinase.